The following is a 172-amino-acid chain: Ribosome maturation factor RimM (172 aa).

In terms of domain architecture, PRC barrel spans 97–170 (ENEFYFHEII…KITIEVMEGL (74 aa)).

Belongs to the RimM family. As to quaternary structure, binds ribosomal protein uS19.

The protein resides in the cytoplasm. In terms of biological role, an accessory protein needed during the final step in the assembly of 30S ribosomal subunit, possibly for assembly of the head region. Essential for efficient processing of 16S rRNA. May be needed both before and after RbfA during the maturation of 16S rRNA. It has affinity for free ribosomal 30S subunits but not for 70S ribosomes. This chain is Ribosome maturation factor RimM, found in Listeria monocytogenes serovar 1/2a (strain ATCC BAA-679 / EGD-e).